Reading from the N-terminus, the 256-residue chain is L-erythrulose-1-phosphate isomerase (256 aa).

The Electrophile role is filled by His96. Catalysis depends on Glu169, which acts as the Proton acceptor. Substrate contacts are provided by Gly175 and Ser212.

Belongs to the triosephosphate isomerase family. Homodimer.

The protein resides in the cytoplasm. The catalysed reaction is L-erythrulose 1-phosphate = D-erythrulose 4-phosphate. It functions in the pathway carbohydrate metabolism; erythritol degradation. In terms of biological role, catalyzes the isomerization of D-erythrulose-4P to L-erythrulose-1P. Involved in the degradation pathway of erythritol, that allows B.abortus to grow on this compound as the sole carbon source. The polypeptide is L-erythrulose-1-phosphate isomerase (Brucella abortus (strain 2308)).